Here is a 345-residue protein sequence, read N- to C-terminus: tRNA-specific 2-thiouridylase MnmA (345 aa).

Residues 6–13 and leucine 32 contribute to the ATP site; that span reads AMSGGVDS. Cysteine 100 functions as the Nucleophile in the catalytic mechanism. Cysteines 100 and 197 form a disulfide. Glycine 124 is an ATP binding site. An interaction with tRNA region spans residues 146–148; the sequence is RDQ. Cysteine 197 serves as the catalytic Cysteine persulfide intermediate.

The protein belongs to the MnmA/TRMU family.

It is found in the cytoplasm. The enzyme catalyses S-sulfanyl-L-cysteinyl-[protein] + uridine(34) in tRNA + AH2 + ATP = 2-thiouridine(34) in tRNA + L-cysteinyl-[protein] + A + AMP + diphosphate + H(+). Its function is as follows. Catalyzes the 2-thiolation of uridine at the wobble position (U34) of tRNA, leading to the formation of s(2)U34. This chain is tRNA-specific 2-thiouridylase MnmA, found in Acidiphilium cryptum (strain JF-5).